Reading from the N-terminus, the 452-residue chain is MTTNAPGAVILAAGKGTRMKSRLPKVLHPIAGKPMLGHVLSAVSALGSERPVLVVGPGMDEVATYARGLVSGLTIAVQEKQLGTGDAVRAAAPHIDKKESVVLVVFGDTPLVRAETLADMTRRCEEGSDIVVLGFEAADPTGYGRLILDGNDVVRIVEHKDASEEERKNKLCFGGPMAVRAAHLPALLAKLTNKNAQGEFYMTDFVAHGRAAGLVCSAVFCLEADMQGVNSRADLAAAEATMQQRLRMAAMAGGVTMLDPSSVYLSMDTEFGEDVTVGQNVVFGPGCVIANGVTIKAFSHLEGAHVAEGAEIGPFARIRPGSEIGRKARIGNFVETKKARIEDGAKVNHLSYIGDARVGAGANIGAGTITCNYDGYNKFFTDIGAGAFIGSNSSLVAPVSIGDGAYLGSGSVVTKDVAADALGVARARQFEKPGWAAAFHAKHKDKKKASGE.

The tract at residues 1-232 (MTTNAPGAVI…EADMQGVNSR (232 aa)) is pyrophosphorylase. Residues 11–14 (LAAG), K25, Q78, and 83–84 (GT) contribute to the UDP-N-acetyl-alpha-D-glucosamine site. D108 is a binding site for Mg(2+). UDP-N-acetyl-alpha-D-glucosamine-binding residues include G144, E158, and N230. N230 lines the Mg(2+) pocket. Residues 233–253 (ADLAAAEATMQQRLRMAAMAG) form a linker region. The segment at 254–452 (GVTMLDPSSV…HKDKKKASGE (199 aa)) is N-acetyltransferase. The UDP-N-acetyl-alpha-D-glucosamine site is built by R319 and K337. Residue H349 is the Proton acceptor of the active site. UDP-N-acetyl-alpha-D-glucosamine is bound by residues Y352 and N363. Acetyl-CoA contacts are provided by residues A366, 372-373 (NY), S391, S409, and R426.

In the N-terminal section; belongs to the N-acetylglucosamine-1-phosphate uridyltransferase family. This sequence in the C-terminal section; belongs to the transferase hexapeptide repeat family. In terms of assembly, homotrimer. Requires Mg(2+) as cofactor.

It localises to the cytoplasm. The enzyme catalyses alpha-D-glucosamine 1-phosphate + acetyl-CoA = N-acetyl-alpha-D-glucosamine 1-phosphate + CoA + H(+). The catalysed reaction is N-acetyl-alpha-D-glucosamine 1-phosphate + UTP + H(+) = UDP-N-acetyl-alpha-D-glucosamine + diphosphate. Its pathway is nucleotide-sugar biosynthesis; UDP-N-acetyl-alpha-D-glucosamine biosynthesis; N-acetyl-alpha-D-glucosamine 1-phosphate from alpha-D-glucosamine 6-phosphate (route II): step 2/2. It functions in the pathway nucleotide-sugar biosynthesis; UDP-N-acetyl-alpha-D-glucosamine biosynthesis; UDP-N-acetyl-alpha-D-glucosamine from N-acetyl-alpha-D-glucosamine 1-phosphate: step 1/1. The protein operates within bacterial outer membrane biogenesis; LPS lipid A biosynthesis. Functionally, catalyzes the last two sequential reactions in the de novo biosynthetic pathway for UDP-N-acetylglucosamine (UDP-GlcNAc). The C-terminal domain catalyzes the transfer of acetyl group from acetyl coenzyme A to glucosamine-1-phosphate (GlcN-1-P) to produce N-acetylglucosamine-1-phosphate (GlcNAc-1-P), which is converted into UDP-GlcNAc by the transfer of uridine 5-monophosphate (from uridine 5-triphosphate), a reaction catalyzed by the N-terminal domain. This chain is Bifunctional protein GlmU, found in Parvibaculum lavamentivorans (strain DS-1 / DSM 13023 / NCIMB 13966).